Consider the following 49-residue polypeptide: Peridinin-chlorophyll a-binding protein (49 aa).

Monomer. In terms of processing, binds 12 peridinin and 2 chlorophyll a molecules per monomer.

It is found in the plastid. Its subcellular location is the chloroplast. Water-soluble antenna for capture of solar energy in the blue-green range. Peridinin is an asymmetric carotenoid. This chain is Peridinin-chlorophyll a-binding protein, found in Alexandrium cohorticula (Dinoflagellate).